A 529-amino-acid chain; its full sequence is Bifunctional purine biosynthesis protein PurH (529 aa).

Positions Met-1 to Val-148 constitute an MGS-like domain. At Lys-287 the chain carries N6-acetyllysine.

The protein belongs to the PurH family.

The catalysed reaction is (6R)-10-formyltetrahydrofolate + 5-amino-1-(5-phospho-beta-D-ribosyl)imidazole-4-carboxamide = 5-formamido-1-(5-phospho-D-ribosyl)imidazole-4-carboxamide + (6S)-5,6,7,8-tetrahydrofolate. It carries out the reaction IMP + H2O = 5-formamido-1-(5-phospho-D-ribosyl)imidazole-4-carboxamide. Its pathway is purine metabolism; IMP biosynthesis via de novo pathway; 5-formamido-1-(5-phospho-D-ribosyl)imidazole-4-carboxamide from 5-amino-1-(5-phospho-D-ribosyl)imidazole-4-carboxamide (10-formyl THF route): step 1/1. It participates in purine metabolism; IMP biosynthesis via de novo pathway; IMP from 5-formamido-1-(5-phospho-D-ribosyl)imidazole-4-carboxamide: step 1/1. This chain is Bifunctional purine biosynthesis protein PurH, found in Escherichia coli (strain 55989 / EAEC).